The following is a 274-amino-acid chain: MAVIKMKPTSPGMRGMVKISRDHLHKGEPYAPLLEPQFQHSGRNNNGHITVRHKGGGHKHHYRVVDFKRNKDAIPAKVERIEYDPNRTAHIALICYADGERAYIIAPRGLEVGATILSGSEAPIRVGNTLPIRNIPVGSTIHCIEMQIGKGAQIARSAGTSATLLAREGTYAQVRMRSGEVRKIHIECRATIGEVANEEHSLRRLGKAGVKRWMGIRPTVRGVVMNPVDHPHGGGEGKTGEGRHPVDPWGNLTKGYRTRNNKRTQVMIVSRRKK.

The segment at 224 to 256 (VMNPVDHPHGGGEGKTGEGRHPVDPWGNLTKGY) is disordered. Positions 229 to 246 (DHPHGGGEGKTGEGRHPV) are enriched in basic and acidic residues.

The protein belongs to the universal ribosomal protein uL2 family. In terms of assembly, part of the 50S ribosomal subunit. Forms a bridge to the 30S subunit in the 70S ribosome.

Functionally, one of the primary rRNA binding proteins. Required for association of the 30S and 50S subunits to form the 70S ribosome, for tRNA binding and peptide bond formation. It has been suggested to have peptidyltransferase activity; this is somewhat controversial. Makes several contacts with the 16S rRNA in the 70S ribosome. The chain is Large ribosomal subunit protein uL2 from Polaromonas naphthalenivorans (strain CJ2).